A 1464-amino-acid chain; its full sequence is DNA-directed RNA polymerase subunit beta' (1464 aa).

Zn(2+) is bound by residues Cys-66, Cys-68, Cys-96, and Cys-99. Residues Asp-491, Asp-493, and Asp-495 each contribute to the Mg(2+) site. Zn(2+) contacts are provided by Cys-838, Cys-912, Cys-919, and Cys-922. Residues 1143–1200 (NDDDDDDYYDSDYYDYYDYSDDDDDYDDYDDYYYNYDDDENDNDNDYDYDYDYDYDYD) show a composition bias toward acidic residues. The segment at 1143–1229 (NDDDDDDYYD…YDYDYDSDSD (87 aa)) is disordered. Residues 1204-1219 (HNSYSHNSYSPSSNDN) show a composition bias toward low complexity. A compositionally biased stretch (acidic residues) spans 1220–1229 (YDYDYDSDSD).

This sequence belongs to the RNA polymerase beta' chain family. As to quaternary structure, the RNAP catalytic core consists of 2 alpha, 1 beta, 1 beta' and 1 omega subunit. When a sigma factor is associated with the core the holoenzyme is formed, which can initiate transcription. It depends on Mg(2+) as a cofactor. Zn(2+) serves as cofactor.

The enzyme catalyses RNA(n) + a ribonucleoside 5'-triphosphate = RNA(n+1) + diphosphate. Its function is as follows. DNA-dependent RNA polymerase catalyzes the transcription of DNA into RNA using the four ribonucleoside triphosphates as substrates. This is DNA-directed RNA polymerase subunit beta' from Karelsulcia muelleri (strain GWSS) (Sulcia muelleri).